We begin with the raw amino-acid sequence, 217 residues long: GRB2-related adapter protein (217 aa).

One can recognise an SH3 1 domain in the interval 1–58 (MESVALYSFQATESDELAFNKGDTLKILNMEDDQNWYKAELRGAEGFVPKNYIRVKPH). Positions 60–152 (WYSGRISRQL…RRQIFLCDEQ (93 aa)) constitute an SH2 domain. Positions 158–217 (SRACFAQAQFDFSAQDPSQLSLRRGDIVEVVEREDPHWWRGRAGGRLGFFPRSYVQPVHL) constitute an SH3 2 domain.

Belongs to the GRB2/sem-5/DRK family. Associates through its SH2 domain with ligand-activated receptors for stem cell factor (KIT) and erythropoietin (EPOR). Also forms a stable complex with the Bcr-Abl oncoprotein. GRAP is associated with the Ras guanine nucleotide exchange factor SOS1, primarily through its N-terminal SH3 domain. Interacts with phosphorylated LAT upon TCR activation. Interacts with SHB. As to expression, expressed in inner ear, in neruonal fibers innervating cochlear and utricular auditory hair cells (at protein level).

It is found in the membrane. The protein localises to the synapse. Its function is as follows. Couples signals from receptor and cytoplasmic tyrosine kinases to the Ras signaling pathway. Plays a role in the inner ear and in hearing. This is GRB2-related adapter protein from Mus musculus (Mouse).